Consider the following 229-residue polypeptide: Cytidylate kinase (229 aa).

12 to 20 provides a ligand contact to ATP; that stretch reads GPSGAGKGT.

It belongs to the cytidylate kinase family. Type 1 subfamily.

The protein localises to the cytoplasm. It catalyses the reaction CMP + ATP = CDP + ADP. The catalysed reaction is dCMP + ATP = dCDP + ADP. This Pseudomonas aeruginosa (strain UCBPP-PA14) protein is Cytidylate kinase.